The sequence spans 123 residues: Small ribosomal subunit protein uS13 (123 aa).

Residues A94–K123 form a disordered region. Positions Q101–K123 are enriched in basic residues.

This sequence belongs to the universal ribosomal protein uS13 family. Part of the 30S ribosomal subunit. Forms a loose heterodimer with protein S19. Forms two bridges to the 50S subunit in the 70S ribosome.

Its function is as follows. Located at the top of the head of the 30S subunit, it contacts several helices of the 16S rRNA. In the 70S ribosome it contacts the 23S rRNA (bridge B1a) and protein L5 of the 50S subunit (bridge B1b), connecting the 2 subunits; these bridges are implicated in subunit movement. Contacts the tRNAs in the A and P-sites. This Acetivibrio thermocellus (strain ATCC 27405 / DSM 1237 / JCM 9322 / NBRC 103400 / NCIMB 10682 / NRRL B-4536 / VPI 7372) (Clostridium thermocellum) protein is Small ribosomal subunit protein uS13.